Consider the following 375-residue polypeptide: uncharacterized protein (375 aa).

The 225-residue stretch at 78–302 (KKIEITSTIH…IFPNIRITSP (225 aa)) folds into the Radical SAM core domain. [4Fe-4S] cluster contacts are provided by C92, C98, and C101.

Requires [4Fe-4S] cluster as cofactor.

This is an uncharacterized protein from Methanocaldococcus jannaschii (strain ATCC 43067 / DSM 2661 / JAL-1 / JCM 10045 / NBRC 100440) (Methanococcus jannaschii).